Here is a 296-residue protein sequence, read N- to C-terminus: 33 kDa chaperonin (296 aa).

2 disulfides stabilise this stretch: C238–C240 and C271–C274.

Belongs to the HSP33 family. Under oxidizing conditions two disulfide bonds are formed involving the reactive cysteines. Under reducing conditions zinc is bound to the reactive cysteines and the protein is inactive.

It is found in the cytoplasm. Functionally, redox regulated molecular chaperone. Protects both thermally unfolding and oxidatively damaged proteins from irreversible aggregation. Plays an important role in the bacterial defense system toward oxidative stress. This Clostridium botulinum (strain Loch Maree / Type A3) protein is 33 kDa chaperonin.